Reading from the N-terminus, the 620-residue chain is Probably inactive leucine-rich repeat receptor-like protein kinase At5g48380 (620 aa).

The N-terminal stretch at 1–27 (MMMGRLVFVIWLYNCLCLLLLSSLVDA) is a signal peptide. Residues 28-228 (DQANIDCLRT…SASSSRGKVV (201 aa)) are Extracellular-facing. N56, N111, N119, and N147 each carry an N-linked (GlcNAc...) asparagine glycan. LRR repeat units lie at residues 101-124 (DLTGLDLSRNNFSGPLPANISTLI), 126-148 (LVTILDLSYNSFSGEIPMLISNI), 150-172 (FLNTLMLQHNQFTGTLPPQLAQL), and 174-196 (RLKTFSVSDNRLVGPIPNFNQTL). N193 carries N-linked (GlcNAc...) asparagine glycosylation. A helical membrane pass occupies residues 229–249 (IIAAVGGLTAAALVVGVVLFF). Over 250-620 (YFRKLGAVRK…DFIEELIVAR (371 aa)) the chain is Cytoplasmic. Phosphothreonine is present on T300. One can recognise a Protein kinase domain in the interval 303-596 (FKKDNIIATG…RAIGESYNFT (294 aa)). Residues 309–317 (IATGRTGTM) and K331 contribute to the ATP site. Residue T463 is modified to Phosphothreonine. Phosphotyrosine is present on Y479. Residue T482 is modified to Phosphothreonine.

It belongs to the protein kinase superfamily. Ser/Thr protein kinase family.

It is found in the cell membrane. The sequence is that of Probably inactive leucine-rich repeat receptor-like protein kinase At5g48380 from Arabidopsis thaliana (Mouse-ear cress).